The primary structure comprises 368 residues: Polymerase delta-interacting protein 2 (368 aa).

The transit peptide at 1-51 (MAACTARRALAVGSRWWSRSLTGARWPRPLCAAAGAGAFSPASTTTTRRHL) directs the protein to the mitochondrion. The 126-residue stretch at 235–360 (RETTENIRVT…FSLESNKDEK (126 aa)) folds into the ApaG domain. Threonine 292 carries the phosphothreonine modification.

Interacts with PCNA and POLD2. Interacts with SSBP1. Interacts with PRIMPOL; leading to enhance DNA polymerase activity of PRIMPOL. Interacts with POLH. Interacts with POLD1; leading to stimulate DNA polymerase activity of POLD1.

It localises to the mitochondrion matrix. The protein resides in the nucleus. In terms of biological role, involved in DNA damage tolerance by regulating translesion synthesis (TLS) of templates carrying DNA damage lesions such as 8oxoG and abasic sites. May act by stimulating activity of DNA polymerases involved in TLS, such as PRIMPOL and polymerase delta (POLD1). This is Polymerase delta-interacting protein 2 from Homo sapiens (Human).